Reading from the N-terminus, the 310-residue chain is UPF0761 membrane protein VF_0100 (310 aa).

6 helical membrane passes run 34–54 (YMAY…LSVL), 97–117 (MTAV…SSID), 136–156 (FSLY…SLAA), 178–198 (LLGW…YLLV), 207–227 (HALI…VGFA), and 242–262 (ALAA…IVLI).

It belongs to the UPF0761 family.

It localises to the cell inner membrane. The sequence is that of UPF0761 membrane protein VF_0100 from Aliivibrio fischeri (strain ATCC 700601 / ES114) (Vibrio fischeri).